The following is a 179-amino-acid chain: Probable phosphopantothenoylcysteine decarboxylase (179 aa).

Residue Asn124 coordinates substrate. Cys157 serves as the catalytic Proton donor.

It belongs to the HFCD (homooligomeric flavin containing Cys decarboxylase) superfamily. FMN is required as a cofactor.

It carries out the reaction N-[(R)-4-phosphopantothenoyl]-L-cysteine + H(+) = (R)-4'-phosphopantetheine + CO2. It participates in cofactor biosynthesis; coenzyme A biosynthesis; CoA from (R)-pantothenate: step 3/5. Catalyzes the decarboxylation of 4'-phosphopantothenoylcysteine to 4'-phosphopantetheine. The polypeptide is Probable phosphopantothenoylcysteine decarboxylase (coaC) (Streptococcus mutans serotype c (strain ATCC 700610 / UA159)).